The primary structure comprises 169 residues: S-ribosylhomocysteine lyase (169 aa).

Residues His54, His58, and Cys129 each contribute to the Fe cation site.

Belongs to the LuxS family. As to quaternary structure, homodimer. It depends on Fe cation as a cofactor.

It catalyses the reaction S-(5-deoxy-D-ribos-5-yl)-L-homocysteine = (S)-4,5-dihydroxypentane-2,3-dione + L-homocysteine. In terms of biological role, involved in the synthesis of autoinducer 2 (AI-2) which is secreted by bacteria and is used to communicate both the cell density and the metabolic potential of the environment. The regulation of gene expression in response to changes in cell density is called quorum sensing. Catalyzes the transformation of S-ribosylhomocysteine (RHC) to homocysteine (HC) and 4,5-dihydroxy-2,3-pentadione (DPD). The protein is S-ribosylhomocysteine lyase of Glaesserella parasuis serovar 5 (strain SH0165) (Haemophilus parasuis).